The primary structure comprises 345 residues: 4-hydroxy-2-oxovalerate aldolase 3 (345 aa).

The Pyruvate carboxyltransferase domain occupies 8-260 (ITVHDMTLRD…ETGVDVWKIQ (253 aa)). A substrate-binding site is contributed by 16-17 (RD). Position 17 (D17) interacts with Mn(2+). H20 acts as the Proton acceptor in catalysis. Positions 170 and 199 each coordinate substrate. Mn(2+) is bound by residues H199 and H201. Y290 serves as a coordination point for substrate.

This sequence belongs to the 4-hydroxy-2-oxovalerate aldolase family.

The enzyme catalyses (S)-4-hydroxy-2-oxopentanoate = acetaldehyde + pyruvate. The polypeptide is 4-hydroxy-2-oxovalerate aldolase 3 (aphG) (Comamonas testosteroni (Pseudomonas testosteroni)).